The primary structure comprises 278 residues: 4-hydroxy-tetrahydrodipicolinate reductase (278 aa).

NAD(+)-binding positions include Gly13–Met18 and Gly111–Thr113. The Proton donor/acceptor role is filled by His167. His168 provides a ligand contact to (S)-2,3,4,5-tetrahydrodipicolinate. The active-site Proton donor is the Lys171. Gly177–Thr178 is a binding site for (S)-2,3,4,5-tetrahydrodipicolinate.

It belongs to the DapB family.

The protein localises to the cytoplasm. It carries out the reaction (S)-2,3,4,5-tetrahydrodipicolinate + NAD(+) + H2O = (2S,4S)-4-hydroxy-2,3,4,5-tetrahydrodipicolinate + NADH + H(+). It catalyses the reaction (S)-2,3,4,5-tetrahydrodipicolinate + NADP(+) + H2O = (2S,4S)-4-hydroxy-2,3,4,5-tetrahydrodipicolinate + NADPH + H(+). It participates in amino-acid biosynthesis; L-lysine biosynthesis via DAP pathway; (S)-tetrahydrodipicolinate from L-aspartate: step 4/4. In terms of biological role, catalyzes the conversion of 4-hydroxy-tetrahydrodipicolinate (HTPA) to tetrahydrodipicolinate. This Nostoc punctiforme (strain ATCC 29133 / PCC 73102) protein is 4-hydroxy-tetrahydrodipicolinate reductase.